The chain runs to 113 residues: Cytochrome c2 (113 aa).

4 residues coordinate heme c: cysteine 15, cysteine 18, histidine 19, and methionine 92.

It belongs to the cytochrome c family. Binds 1 heme c group covalently per subunit.

Its function is as follows. Cytochrome c2 is found mainly in purple, non-sulfur, photosynthetic bacteria where it functions as the electron donor to the oxidized bacteriochlorophyll in the photophosphorylation pathway. However, it may also have a role in the respiratory chain and is found in some non-photosynthetic bacteria. The chain is Cytochrome c2 from Pararhodospirillum photometricum (Rhodospirillum photometricum).